The chain runs to 469 residues: Threonine synthase (469 aa).

Lysine 112 bears the N6-(pyridoxal phosphate)lysine mark.

This sequence belongs to the threonine synthase family. Pyridoxal 5'-phosphate is required as a cofactor.

It catalyses the reaction O-phospho-L-homoserine + H2O = L-threonine + phosphate. It participates in amino-acid biosynthesis; L-threonine biosynthesis; L-threonine from L-aspartate: step 5/5. Functionally, catalyzes the gamma-elimination of phosphate from L-phosphohomoserine and the beta-addition of water to produce L-threonine. The chain is Threonine synthase (thrC) from Pseudomonas aeruginosa (strain ATCC 15692 / DSM 22644 / CIP 104116 / JCM 14847 / LMG 12228 / 1C / PRS 101 / PAO1).